Consider the following 293-residue polypeptide: MAALASVPDTLAPGSPAKVGILDLAFAVRGGRTELVERYQKTPLQIMRPLWIDPEQPGMSYVYIMATGAGVAQADRYRMDFRCGPDTQVHLTTQAATKIFRMEHDYASQRVHLSAEAGSYVEYLPDPLIPFKGSRFYQRTEVTVAPGATVVVADTLTAGRLARGERHAYRVLATDLHISRPDGTLLAIDTLRLVPGRRGGGVLGPAVFAGHDLVASLFAVTDRVPATVLADALHDALAGLGLLHGVSVLPRDCGAWVRVLDDSPIRIAGAQEAVRQAVRRLLTGRPAPDLRKP.

Belongs to the UreD family. As to quaternary structure, ureD, UreF and UreG form a complex that acts as a GTP-hydrolysis-dependent molecular chaperone, activating the urease apoprotein by helping to assemble the nickel containing metallocenter of UreC. The UreE protein probably delivers the nickel.

The protein resides in the cytoplasm. Functionally, required for maturation of urease via the functional incorporation of the urease nickel metallocenter. In Streptomyces griseus subsp. griseus (strain JCM 4626 / CBS 651.72 / NBRC 13350 / KCC S-0626 / ISP 5235), this protein is Urease accessory protein UreD 2.